Here is a 331-residue protein sequence, read N- to C-terminus: Calcium-binding and coiled-coil domain-containing protein 2 (331 aa).

The CLIR signature appears at 128-131; that stretch reads IMVV. The stretch at 132 to 309 forms a coiled coil; it reads INKEKVEEME…EKASWEKEKA (178 aa). The tract at residues 189-310 is disordered; the sequence is KASWEKEKAS…KASWEKEKAP (122 aa). Positions 190–193 match the LIR-like motif; the sequence is ASWE. An interaction with LGALS8 region spans residues 292–302; it reads KEKASWEEEKA.

Belongs to the CALCOCO family. In terms of assembly, dimer. Part of a complex consisting of CALCOCO2, TAX1BP1 and MYO6. Interacts with MYO6. Interacts with GEMIN4. Interacts with ATG8 family members MAP1LC3A, MAP1LC3B, GABARAP, GABARAPL1 and GABARAPL2. Interacts with ATG8 family member MAP1LC3C. Interacts with LGALS8. Interacts with TOM1; the interaction is indirect and is mediated by MYO6, which acts as a bridge between TOM1 and CALCOCO2. Interacts with AZI2.

Its subcellular location is the cytoplasm. It localises to the perinuclear region. It is found in the cytoskeleton. The protein localises to the cytoplasmic vesicle. The protein resides in the autophagosome membrane. In terms of biological role, xenophagy-specific receptor required for autophagy-mediated intracellular bacteria degradation. Acts as an effector protein of galectin-sensed membrane damage that restricts the proliferation of infecting pathogens upon entry into the cytosol by targeting LGALS8-associated bacteria for autophagy. Initially orchestrates bacteria targeting to autophagosomes and subsequently ensures pathogen degradation by regulating pathogen-containing autophagosome maturation. Bacteria targeting to autophagosomes relies on its interaction with MAP1LC3A, MAP1LC3B and/or GABARAPL2, whereas regulation of pathogen-containing autophagosome maturation requires the interaction with MAP3LC3C. May play a role in ruffle formation and actin cytoskeleton organization and seems to negatively regulate constitutive secretion. The sequence is that of Calcium-binding and coiled-coil domain-containing protein 2 from Mus musculus (Mouse).